A 121-amino-acid polypeptide reads, in one-letter code: Large ribosomal subunit protein bL12 (121 aa).

The protein belongs to the bacterial ribosomal protein bL12 family. As to quaternary structure, homodimer. Part of the ribosomal stalk of the 50S ribosomal subunit. Forms a multimeric L10(L12)X complex, where L10 forms an elongated spine to which 2 to 4 L12 dimers bind in a sequential fashion. Binds GTP-bound translation factors.

Its function is as follows. Forms part of the ribosomal stalk which helps the ribosome interact with GTP-bound translation factors. Is thus essential for accurate translation. The chain is Large ribosomal subunit protein bL12 from Aliivibrio salmonicida (strain LFI1238) (Vibrio salmonicida (strain LFI1238)).